The chain runs to 302 residues: MYSEFRSIDGIILIDKPYGLSSHETLQKVKGILKIKKMGHTGTLDPLATGMLPMCCGRATKFSQFLMNFKKRYRVIAKLGQKTSTSDSEGQIIHVRPITFTNLQLQKVLKSFHGKIKQIPSMYSAIKYHGHALYKYARQGIVISRKVRDAIIYELKVLGYSYKHKYLELDIICSKGTYIRTLIEDVGEKLNCGAHVISLRRLQVGNYTSFQMIDIKTLNKLVKYNINVLEHILLSVDNAISCFPEVNIVPNVIKNLQNGQKVKTHSGFINQFVRITEGINRRFIGIGKINNINELYSYRLII.

Residue His40 coordinates substrate. Residue Asp45 is the Nucleophile of the active site. 3 residues coordinate substrate: Tyr73, Tyr178, and Leu199.

It belongs to the pseudouridine synthase TruB family. Type 1 subfamily.

It catalyses the reaction uridine(55) in tRNA = pseudouridine(55) in tRNA. Functionally, responsible for synthesis of pseudouridine from uracil-55 in the psi GC loop of transfer RNAs. The chain is tRNA pseudouridine synthase B from Buchnera aphidicola subsp. Baizongia pistaciae (strain Bp).